Here is a 232-residue protein sequence, read N- to C-terminus: Ubiquinone biosynthesis O-methyltransferase (232 aa).

S-adenosyl-L-methionine contacts are provided by Arg-36, Gly-55, Asp-76, and Met-120.

The protein belongs to the methyltransferase superfamily. UbiG/COQ3 family.

It carries out the reaction a 3-demethylubiquinol + S-adenosyl-L-methionine = a ubiquinol + S-adenosyl-L-homocysteine + H(+). The enzyme catalyses a 3-(all-trans-polyprenyl)benzene-1,2-diol + S-adenosyl-L-methionine = a 2-methoxy-6-(all-trans-polyprenyl)phenol + S-adenosyl-L-homocysteine + H(+). It participates in cofactor biosynthesis; ubiquinone biosynthesis. Its function is as follows. O-methyltransferase that catalyzes the 2 O-methylation steps in the ubiquinone biosynthetic pathway. This chain is Ubiquinone biosynthesis O-methyltransferase, found in Burkholderia multivorans (strain ATCC 17616 / 249).